Here is a 57-residue protein sequence, read N- to C-terminus: Small ribosomal subunit protein bS21 (57 aa).

The protein belongs to the bacterial ribosomal protein bS21 family.

This is Small ribosomal subunit protein bS21 from Bacillus pumilus (strain SAFR-032).